The chain runs to 276 residues: NH(3)-dependent NAD(+) synthetase (276 aa).

An ATP-binding site is contributed by 43–50 (GISGGVDS). Aspartate 49 is a Mg(2+) binding site. Residue arginine 146 participates in deamido-NAD(+) binding. Threonine 166 is an ATP binding site. Glutamate 171 contacts Mg(2+). 2 residues coordinate deamido-NAD(+): lysine 179 and aspartate 186. Lysine 195 and threonine 217 together coordinate ATP. 266 to 267 (HK) contacts deamido-NAD(+).

The protein belongs to the NAD synthetase family. As to quaternary structure, homodimer.

The enzyme catalyses deamido-NAD(+) + NH4(+) + ATP = AMP + diphosphate + NAD(+) + H(+). Its pathway is cofactor biosynthesis; NAD(+) biosynthesis; NAD(+) from deamido-NAD(+) (ammonia route): step 1/1. Functionally, catalyzes the ATP-dependent amidation of deamido-NAD to form NAD. Uses ammonia as a nitrogen source. The sequence is that of NH(3)-dependent NAD(+) synthetase from Shewanella frigidimarina (strain NCIMB 400).